The sequence spans 639 residues: DNA gyrase subunit B (639 aa).

A compositionally biased stretch (basic and acidic residues) spans glutamine 392–alanine 402. The tract at residues glutamine 392–glutamine 416 is disordered. In terms of domain architecture, Toprim spans serine 423–proline 537. Residues glutamate 429, aspartate 502, and aspartate 504 each coordinate Mg(2+). Lysine 624 participates in a covalent cross-link: Glycyl lysine isopeptide (Lys-Gly) (interchain with G-Cter in SAMP2).

It belongs to the type II topoisomerase GyrB family. Heterotetramer, composed of two GyrA and two GyrB chains. In the heterotetramer, GyrA contains the active site tyrosine that forms a transient covalent intermediate with DNA, while GyrB binds cofactors and catalyzes ATP hydrolysis. Mg(2+) is required as a cofactor. It depends on Mn(2+) as a cofactor. The cofactor is Ca(2+).

It is found in the cytoplasm. It catalyses the reaction ATP-dependent breakage, passage and rejoining of double-stranded DNA.. A type II topoisomerase that negatively supercoils closed circular double-stranded (ds) DNA in an ATP-dependent manner to modulate DNA topology and maintain chromosomes in an underwound state. Negative supercoiling favors strand separation, and DNA replication, transcription, recombination and repair, all of which involve strand separation. Also able to catalyze the interconversion of other topological isomers of dsDNA rings, including catenanes and knotted rings. Type II topoisomerases break and join 2 DNA strands simultaneously in an ATP-dependent manner. The sequence is that of DNA gyrase subunit B from Haloferax volcanii (strain ATCC 29605 / DSM 3757 / JCM 8879 / NBRC 14742 / NCIMB 2012 / VKM B-1768 / DS2) (Halobacterium volcanii).